A 381-amino-acid polypeptide reads, in one-letter code: Cytochrome b (381 aa).

4 helical membrane passes run 34–54, 78–99, 114–134, and 179–199; these read FGSL…MLAM, WMIR…YLHI, WNTG…GYVL, and FFAL…VHLT. The heme b site is built by H84 and H98. H183 and H197 together coordinate heme b. H202 is a binding site for a ubiquinone. A run of 4 helical transmembrane segments spans residues 227-247, 289-309, 321-341, and 348-368; these read MKDL…AFFT, LGGV…PLLH, MSQI…WVGS, and FIII…FLFP.

The protein belongs to the cytochrome b family. As to quaternary structure, the cytochrome bc1 complex contains 11 subunits: 3 respiratory subunits (MT-CYB, CYC1 and UQCRFS1), 2 core proteins (UQCRC1 and UQCRC2) and 6 low-molecular weight proteins (UQCRH/QCR6, UQCRB/QCR7, UQCRQ/QCR8, UQCR10/QCR9, UQCR11/QCR10 and a cleavage product of UQCRFS1). This cytochrome bc1 complex then forms a dimer. The cofactor is heme b.

The protein resides in the mitochondrion inner membrane. Component of the ubiquinol-cytochrome c reductase complex (complex III or cytochrome b-c1 complex) that is part of the mitochondrial respiratory chain. The b-c1 complex mediates electron transfer from ubiquinol to cytochrome c. Contributes to the generation of a proton gradient across the mitochondrial membrane that is then used for ATP synthesis. This chain is Cytochrome b (MT-CYB), found in Nothoprocta perdicaria (Chilean tinamou).